Consider the following 37-residue polypeptide: Dolichyl-diphosphooligosaccharide--protein glycosyltransferase subunit 4 (37 aa).

Over 1 to 4 (MITD) the chain is Lumenal. The chain crosses the membrane as a helical span at residues 5–25 (VQLAIFANMLGVSLFLLVVLY). Residues 26-37 (HYVAVNNPKKQE) are Cytoplasmic-facing.

It belongs to the OST4 family. As to quaternary structure, component of the oligosaccharyltransferase (OST) complex. OST exists in two different complex forms which contain common core subunits RPN1, RPN2, OST48, OST4, DAD1 and TMEM258, either STT3A or STT3B as catalytic subunits, and form-specific accessory subunits. STT3A complex assembly occurs through the formation of 3 subcomplexes. Subcomplex 1 contains RPN1 and TMEM258, subcomplex 2 contains the STT3A-specific subunits STT3A, DC2/OSTC, and KCP2 as well as the core subunit OST4, and subcomplex 3 contains RPN2, DAD1, and OST48. The STT3A complex can form stable complexes with the Sec61 complex or with both the Sec61 and TRAP complexes.

The protein localises to the endoplasmic reticulum. It is found in the endoplasmic reticulum membrane. The protein operates within protein modification; protein glycosylation. Subunit of the oligosaccharyl transferase (OST) complex that catalyzes the initial transfer of a defined glycan (Glc(3)Man(9)GlcNAc(2) in eukaryotes) from the lipid carrier dolichol-pyrophosphate to an asparagine residue within an Asn-X-Ser/Thr consensus motif in nascent polypeptide chains, the first step in protein N-glycosylation. N-glycosylation occurs cotranslationally and the complex associates with the Sec61 complex at the channel-forming translocon complex that mediates protein translocation across the endoplasmic reticulum (ER). All subunits are required for a maximal enzyme activity. Specifically involved in maintaining stability of STT3A-containing OST complexes. This chain is Dolichyl-diphosphooligosaccharide--protein glycosyltransferase subunit 4, found in Homo sapiens (Human).